A 705-amino-acid polypeptide reads, in one-letter code: Polyribonucleotide nucleotidyltransferase (705 aa).

The Mg(2+) site is built by aspartate 486 and aspartate 492. Residues proline 553–isoleucine 612 enclose the KH domain. Residues glycine 622–lysine 690 form the S1 motif domain.

Belongs to the polyribonucleotide nucleotidyltransferase family. Component of the RNA degradosome, which is a multiprotein complex involved in RNA processing and mRNA degradation. The cofactor is Mg(2+).

The protein resides in the cytoplasm. It carries out the reaction RNA(n+1) + phosphate = RNA(n) + a ribonucleoside 5'-diphosphate. Functionally, involved in mRNA degradation. Catalyzes the phosphorolysis of single-stranded polyribonucleotides processively in the 3'- to 5'-direction. The chain is Polyribonucleotide nucleotidyltransferase from Yersinia pseudotuberculosis serotype O:3 (strain YPIII).